The sequence spans 260 residues: MLTILKLGGSILSDKNVPYSIKWDNLERIAMEIKNALDYYKNQNKEIKLILVHGGGAFGHPVAKKYLKIEDGKKIFINMEKGFWEIQRAMRRFNNIIIDTLQSYDIPAVSIQPSSFVVFGDKLIFDTSAIKEMLKRNLVPVIHGDIVIDDKNGYRIISGDDIVPYLANELKADLILYATDVDGVLIDNKPIKRIDKNNIYKILNYLSGSNSIDVTGGMKYKIDMIRKNKCRGFVFNGNKANNIYKALLGEVEGTEIDFSE.

6–10 is an ATP binding site; it reads KLGGS. Glycine 55 contributes to the substrate binding site. Glycine 56 contributes to the ATP binding site. Substrate is bound by residues histidine 60 and glycine 159. The ATP site is built by aspartate 180, glycine 217, and lysine 221.

It belongs to the isopentenyl phosphate kinase family. Homodimer.

It carries out the reaction isopentenyl phosphate + ATP = isopentenyl diphosphate + ADP. Functionally, catalyzes the formation of isopentenyl diphosphate (IPP), the building block of all isoprenoids. Has no activity with farnesyl phosphate. The chain is Isopentenyl phosphate kinase from Methanocaldococcus jannaschii (strain ATCC 43067 / DSM 2661 / JAL-1 / JCM 10045 / NBRC 100440) (Methanococcus jannaschii).